We begin with the raw amino-acid sequence, 63 residues long: Trypsin inhibitor 5 (63 aa).

Residues 1–21 (MASVAESSGVVEVIELISDGG) form the signal peptide. Residues 22–34 (NDLPRKIMSGRHG) constitute a propeptide that is removed on maturation. 3 disulfides stabilise this stretch: Cys37–Cys54, Cys44–Cys56, and Cys50–Cys62.

Belongs to the protease inhibitor I7 (squash-type serine protease inhibitor) family.

The protein resides in the secreted. Inhibits trypsin. The polypeptide is Trypsin inhibitor 5 (Luffa aegyptiaca (Sponge gourd)).